Consider the following 396-residue polypeptide: Digeranylgeranylglycerophospholipid reductase (396 aa).

Gly14, Glu33, Cys44, Gly45, Gly47, Arg100, Ala124, Glu162, Asp283, Gly295, and Ile296 together coordinate FAD. A 2,3-bis-O-(geranylgeranyl)-sn-glycerol 1-phospholipid contacts are provided by Lys338 and Val374.

The protein belongs to the geranylgeranyl reductase family. DGGGPL reductase subfamily. FAD serves as cofactor.

It carries out the reaction 2,3-bis-O-(phytanyl)-sn-glycerol 1-phosphate + 8 NADP(+) = 2,3-bis-O-(geranylgeranyl)-sn-glycerol 1-phosphate + 8 NADPH + 8 H(+). It catalyses the reaction 2,3-bis-O-(phytanyl)-sn-glycerol 1-phosphate + 8 NAD(+) = 2,3-bis-O-(geranylgeranyl)-sn-glycerol 1-phosphate + 8 NADH + 8 H(+). The enzyme catalyses a 2,3-bis-O-phytanyl-sn-glycerol 1-phospholipid + 8 A = a 2,3-bis-O-(geranylgeranyl)-sn-glycerol 1-phospholipid + 8 AH2. The catalysed reaction is CDP-2,3-bis-O-(geranylgeranyl)-sn-glycerol + 8 AH2 = CDP-2,3-bis-O-(phytanyl)-sn-glycerol + 8 A. It carries out the reaction archaetidylserine + 8 AH2 = 2,3-bis-O-phytanyl-sn-glycero-3-phospho-L-serine + 8 A. Its pathway is membrane lipid metabolism; glycerophospholipid metabolism. Its function is as follows. Is involved in the reduction of 2,3-digeranylgeranylglycerophospholipids (unsaturated archaeols) into 2,3-diphytanylglycerophospholipids (saturated archaeols) in the biosynthesis of archaeal membrane lipids. Catalyzes the formation of archaetidic acid (2,3-di-O-phytanyl-sn-glyceryl phosphate) from 2,3-di-O-geranylgeranylglyceryl phosphate (DGGGP) via the hydrogenation of each double bond of the isoprenoid chains. Is also probably able to reduce double bonds of geranyl groups in CDP-2,3-bis-O-(geranylgeranyl)-sn-glycerol and archaetidylserine, thus acting at various stages in the biosynthesis of archaeal membrane lipids. This is Digeranylgeranylglycerophospholipid reductase from Thermoplasma volcanium (strain ATCC 51530 / DSM 4299 / JCM 9571 / NBRC 15438 / GSS1).